Consider the following 471-residue polypeptide: Glutamate--tRNA ligase (471 aa).

Residues 10 to 20 (PSPTGFLHIGG) carry the 'HIGH' region motif. A disordered region spans residues 117–137 (GRPPRYDGRWRDRPASERPTD). The 'KMSKS' region motif lies at 239–243 (KLSKR). Lysine 242 serves as a coordination point for ATP.

It belongs to the class-I aminoacyl-tRNA synthetase family. Glutamate--tRNA ligase type 1 subfamily. Monomer.

It is found in the cytoplasm. The catalysed reaction is tRNA(Glu) + L-glutamate + ATP = L-glutamyl-tRNA(Glu) + AMP + diphosphate. Catalyzes the attachment of glutamate to tRNA(Glu) in a two-step reaction: glutamate is first activated by ATP to form Glu-AMP and then transferred to the acceptor end of tRNA(Glu). This is Glutamate--tRNA ligase from Azorhizobium caulinodans (strain ATCC 43989 / DSM 5975 / JCM 20966 / LMG 6465 / NBRC 14845 / NCIMB 13405 / ORS 571).